The primary structure comprises 262 residues: Acyl-[acyl-carrier-protein]--UDP-N-acetylglucosamine O-acyltransferase (262 aa).

The protein belongs to the transferase hexapeptide repeat family. LpxA subfamily. Homotrimer.

It localises to the cytoplasm. It carries out the reaction a (3R)-hydroxyacyl-[ACP] + UDP-N-acetyl-alpha-D-glucosamine = a UDP-3-O-[(3R)-3-hydroxyacyl]-N-acetyl-alpha-D-glucosamine + holo-[ACP]. It participates in glycolipid biosynthesis; lipid IV(A) biosynthesis; lipid IV(A) from (3R)-3-hydroxytetradecanoyl-[acyl-carrier-protein] and UDP-N-acetyl-alpha-D-glucosamine: step 1/6. Involved in the biosynthesis of lipid A, a phosphorylated glycolipid that anchors the lipopolysaccharide to the outer membrane of the cell. The protein is Acyl-[acyl-carrier-protein]--UDP-N-acetylglucosamine O-acyltransferase of Histophilus somni (strain 129Pt) (Haemophilus somnus).